The following is a 434-amino-acid chain: Mitochondrial distribution and morphology protein 12 (434 aa).

The region spanning 1-434 (MSIDIDWERA…VYPSFWTFLV (434 aa)) is the SMP-LTD domain. Acidic residues predominate over residues 70-83 (YEEDDNENFSESSE). Disordered stretches follow at residues 70–141 (YEED…LRSP) and 181–277 (TPLG…LPPR). Residues 86–97 (SPTREPVDRYGS) are compositionally biased toward basic and acidic residues. Polar residues predominate over residues 215 to 237 (SAQSRPSTANTGNTLLSRGSMSS).

The protein belongs to the MDM12 family. In terms of assembly, component of the ER-mitochondria encounter structure (ERMES) or MDM complex, composed of MMM1, MDM10, MDM12 and MDM34. An MMM1 homodimer associates with one molecule of MDM12 on each side in a pairwise head-to-tail manner, and the SMP-LTD domains of MMM1 and MDM12 generate a continuous hydrophobic tunnel for phospholipid trafficking.

The protein localises to the mitochondrion outer membrane. The protein resides in the endoplasmic reticulum membrane. Its function is as follows. Component of the ERMES/MDM complex, which serves as a molecular tether to connect the endoplasmic reticulum (ER) and mitochondria. Components of this complex are involved in the control of mitochondrial shape and protein biogenesis, and function in nonvesicular lipid trafficking between the ER and mitochondria. MDM12 is required for the interaction of the ER-resident membrane protein MMM1 and the outer mitochondrial membrane-resident beta-barrel protein MDM10. The MDM12-MMM1 subcomplex functions in the major beta-barrel assembly pathway that is responsible for biogenesis of all mitochondrial outer membrane beta-barrel proteins, and acts in a late step after the SAM complex. The MDM10-MDM12-MMM1 subcomplex further acts in the TOM40-specific pathway after the action of the MDM12-MMM1 complex. Essential for establishing and maintaining the structure of mitochondria and maintenance of mtDNA nucleoids. This is Mitochondrial distribution and morphology protein 12 from Ajellomyces dermatitidis (strain ER-3 / ATCC MYA-2586) (Blastomyces dermatitidis).